The primary structure comprises 111 residues: Large ribosomal subunit protein uL22 (111 aa).

It belongs to the universal ribosomal protein uL22 family. Part of the 50S ribosomal subunit.

In terms of biological role, this protein binds specifically to 23S rRNA; its binding is stimulated by other ribosomal proteins, e.g. L4, L17, and L20. It is important during the early stages of 50S assembly. It makes multiple contacts with different domains of the 23S rRNA in the assembled 50S subunit and ribosome. Functionally, the globular domain of the protein is located near the polypeptide exit tunnel on the outside of the subunit, while an extended beta-hairpin is found that lines the wall of the exit tunnel in the center of the 70S ribosome. This Chlamydia pneumoniae (Chlamydophila pneumoniae) protein is Large ribosomal subunit protein uL22.